A 686-amino-acid chain; its full sequence is DNA topoisomerase 1 (686 aa).

The Toprim domain occupies Met1–Lys141. Mg(2+) contacts are provided by Glu7 and Asp107. The region spanning Asn156–Leu574 is the Topo IA-type catalytic domain. The interaction with DNA stretch occupies residues Ser196–Gln201. Residue Tyr317 is the O-(5'-phospho-DNA)-tyrosine intermediate of the active site. Residues Cys606–Cys634 form a C4-type 1 zinc finger. The C4-type 2; atypical zinc-finger motif lies at Cys653–Cys678.

This sequence belongs to the type IA topoisomerase family. In terms of assembly, monomer. Requires Mg(2+) as cofactor.

It catalyses the reaction ATP-independent breakage of single-stranded DNA, followed by passage and rejoining.. Its function is as follows. Releases the supercoiling and torsional tension of DNA, which is introduced during the DNA replication and transcription, by transiently cleaving and rejoining one strand of the DNA duplex. Introduces a single-strand break via transesterification at a target site in duplex DNA. The scissile phosphodiester is attacked by the catalytic tyrosine of the enzyme, resulting in the formation of a DNA-(5'-phosphotyrosyl)-enzyme intermediate and the expulsion of a 3'-OH DNA strand. The free DNA strand then undergoes passage around the unbroken strand, thus removing DNA supercoils. Finally, in the religation step, the DNA 3'-OH attacks the covalent intermediate to expel the active-site tyrosine and restore the DNA phosphodiester backbone. The polypeptide is DNA topoisomerase 1 (Pyrococcus horikoshii (strain ATCC 700860 / DSM 12428 / JCM 9974 / NBRC 100139 / OT-3)).